Reading from the N-terminus, the 360-residue chain is Lipid-A-disaccharide synthase (360 aa).

The protein belongs to the LpxB family.

It carries out the reaction a lipid X + a UDP-2-N,3-O-bis[(3R)-3-hydroxyacyl]-alpha-D-glucosamine = a lipid A disaccharide + UDP + H(+). Its pathway is bacterial outer membrane biogenesis; LPS lipid A biosynthesis. Its function is as follows. Condensation of UDP-2,3-diacylglucosamine and 2,3-diacylglucosamine-1-phosphate to form lipid A disaccharide, a precursor of lipid A, a phosphorylated glycolipid that anchors the lipopolysaccharide to the outer membrane of the cell. The protein is Lipid-A-disaccharide synthase of Helicobacter pylori (strain G27).